The following is a 254-amino-acid chain: Ribonuclease HII (254 aa).

One can recognise an RNase H type-2 domain in the interval 67 to 254 (IVIAGVDEVG…HRMSFLKNII (188 aa)). A divalent metal cation is bound by residues Asp73, Glu74, and Asp170.

It belongs to the RNase HII family. The cofactor is Mn(2+). Mg(2+) serves as cofactor.

The protein localises to the cytoplasm. It catalyses the reaction Endonucleolytic cleavage to 5'-phosphomonoester.. Its function is as follows. Endonuclease that specifically degrades the RNA of RNA-DNA hybrids. The polypeptide is Ribonuclease HII (Clostridium acetobutylicum (strain ATCC 824 / DSM 792 / JCM 1419 / IAM 19013 / LMG 5710 / NBRC 13948 / NRRL B-527 / VKM B-1787 / 2291 / W)).